Here is a 129-residue protein sequence, read N- to C-terminus: MLDYCLVVTGPAYGTQQASSAYQFAQALLAKGHRLSSVFFYREGVLNANQLTAPAGDEFDLVRGWVQLARQHGIELNVCVAAALRRGVTDEQEAAQQGLPAANLQPGFILSGLGSLAEAALSSDRLVQF.

C79 acts as the Cysteine persulfide intermediate in catalysis.

Belongs to the DsrE/TusD family. Heterohexamer, formed by a dimer of trimers. The hexameric TusBCD complex contains 2 copies each of TusB, TusC and TusD. The TusBCD complex interacts with TusE.

It localises to the cytoplasm. In terms of biological role, part of a sulfur-relay system required for 2-thiolation of 5-methylaminomethyl-2-thiouridine (mnm(5)s(2)U) at tRNA wobble positions. Accepts sulfur from TusA and transfers it in turn to TusE. This chain is Sulfurtransferase TusD, found in Serratia proteamaculans (strain 568).